The following is a 351-amino-acid chain: Probable protein phosphatase 2C 41 (351 aa).

Residues 62–348 form the PPM-type phosphatase domain; sequence FTSICSNRGE…DDISVLCLFF (287 aa). 4 residues coordinate Mn(2+): D98, G99, D293, and D339.

Belongs to the PP2C family. The cofactor is Mg(2+). Mn(2+) is required as a cofactor.

The enzyme catalyses O-phospho-L-seryl-[protein] + H2O = L-seryl-[protein] + phosphate. The catalysed reaction is O-phospho-L-threonyl-[protein] + H2O = L-threonyl-[protein] + phosphate. The polypeptide is Probable protein phosphatase 2C 41 (Arabidopsis thaliana (Mouse-ear cress)).